A 378-amino-acid chain; its full sequence is uncharacterized protein (378 aa).

Basic residues predominate over residues 1–11; the sequence is MSPMNRQRKNK. The disordered stretch occupies residues 1–23; the sequence is MSPMNRQRKNKSNVLNEKDERPG.

This is an uncharacterized protein from Caenorhabditis elegans.